Consider the following 303-residue polypeptide: Oxygen-dependent coproporphyrinogen-III oxidase (303 aa).

Serine 93 contacts substrate. Residues histidine 97 and histidine 107 each coordinate a divalent metal cation. Histidine 107 functions as the Proton donor in the catalytic mechanism. 109-111 contacts substrate; that stretch reads NVR. Histidine 146 and histidine 176 together coordinate a divalent metal cation. Positions 241 to 276 are important for dimerization; that stretch reads YVEFNLVYDRGTLFGLQSGGRTESILMSLPPQVRWG. Position 259–261 (259–261) interacts with substrate; it reads GGR.

This sequence belongs to the aerobic coproporphyrinogen-III oxidase family. Homodimer. A divalent metal cation is required as a cofactor.

The protein localises to the cytoplasm. It carries out the reaction coproporphyrinogen III + O2 + 2 H(+) = protoporphyrinogen IX + 2 CO2 + 2 H2O. It participates in porphyrin-containing compound metabolism; protoporphyrin-IX biosynthesis; protoporphyrinogen-IX from coproporphyrinogen-III (O2 route): step 1/1. In terms of biological role, involved in the heme biosynthesis. Catalyzes the aerobic oxidative decarboxylation of propionate groups of rings A and B of coproporphyrinogen-III to yield the vinyl groups in protoporphyrinogen-IX. The chain is Oxygen-dependent coproporphyrinogen-III oxidase from Pseudomonas putida (strain ATCC 700007 / DSM 6899 / JCM 31910 / BCRC 17059 / LMG 24140 / F1).